The primary structure comprises 1358 residues: Insulin-like growth factor 1 receptor (1358 aa).

An N-terminal signal peptide occupies residues 1–25; the sequence is MKAELVPVCTAWILGLLLCLGPAAA. A disulfide bridge links C28 with C47. Residues N74, N99, and N132 are each glycosylated (N-linked (GlcNAc...) asparagine). 13 disulfide bridges follow: C147–C175, C179–C202, C189–C208, C212–C221, C216–C227, C228–C236, C232–C245, C248–C257, C261–C273, C279–C299, C303–C317, C320–C324, and C328–C347. N-linked (GlcNAc...) asparagine glycosylation occurs at N241. N-linked (GlcNAc...) asparagine glycosylation occurs at N310. N-linked (GlcNAc...) asparagine glycans are attached at residues N411 and N432. The cysteines at positions 449 and 482 are disulfide-linked. Fibronectin type-III domains lie at 483 to 603, 604 to 702, 727 to 818, and 829 to 924; these read ESHV…TDAA, VPSI…TEAE, PRPN…FVFA, and IPGI…LKPD. N-linked (GlcNAc...) asparagine glycosylation is found at N488, N528, N616, N634, and N669. The interval 670–691 is disordered; the sequence is GTIDTEGGTEPTKPEGSVGEKG. Topologically, residues 735–934 are extracellular; that stretch reads DVLAVGNSTV…VRNNILQMVV (200 aa). Residues N741, N750, N758, N895, and N908 are each glycosylated (N-linked (GlcNAc...) asparagine). The chain crosses the membrane as a helical span at residues 935–955; it reads AIPLALSFLLVGIISIVCFVF. Topologically, residues 956 to 1358 are cytoplasmic; sequence KKRNSNRLGN…ALPLPQSSAC (403 aa). Phosphotyrosine; by autocatalysis is present on Y976. The Protein kinase domain occupies 995-1270; that stretch reads ITMNRELGQG…SIKDELDPGF (276 aa). Residues 1001–1009 and K1029 contribute to the ATP site; that span reads LGQGSFGMV. Catalysis depends on D1131, which acts as the Proton acceptor. 3 positions are modified to phosphotyrosine; by autocatalysis: Y1157, Y1161, and Y1162. Residues 1336–1358 are disordered; it reads PYAHMNGGRKNERALPLPQSSAC.

This sequence belongs to the protein kinase superfamily. Tyr protein kinase family. Insulin receptor subfamily. In terms of assembly, tetramer of 2 alpha and 2 beta chains linked by disulfide bonds. The alpha chains contribute to the formation of the ligand-binding domain, while the beta chain carries the kinase domain. Mn(2+) is required as a cofactor. Post-translationally, the cytoplasmic domain of the beta subunit is autophosphorylated on Tyr residues in response to low concentrations of insulin-like growth factor (IGF1) and higher concentrations of insulin.

Its subcellular location is the cell membrane. It carries out the reaction L-tyrosyl-[protein] + ATP = O-phospho-L-tyrosyl-[protein] + ADP + H(+). Autophosphorylation activates the kinase activity. This receptor binds insulin-like growth factor 1 (IGF1) with a high affinity and IGF2 with a lower affinity. It has a tyrosine-protein kinase activity, which is necessary for the activation of the IGF1-stimulated downstream signaling cascade. Plays a role in oocyte maturation. Promotes head development by inhibiting Wnt signaling during embryogenesis. This is Insulin-like growth factor 1 receptor (igf1r) from Xenopus laevis (African clawed frog).